The primary structure comprises 1793 residues: Protein TIC 214 (1793 aa).

The next 6 helical transmembrane spans lie at 11-31, 64-84, 90-112, 129-149, 172-192, and 222-242; these read LVSL…YYGF, FITG…HIAL, ITVI…NFLN, IFFQ…SSIL, VGWL…LVWI, and IFLI…PPIY. Residues 1504 to 1524 form a disordered region; that stretch reads DIEEDYGESDSKKGGKDKNKK.

Belongs to the TIC214 family. As to quaternary structure, part of the Tic complex.

Its subcellular location is the plastid. It is found in the chloroplast inner membrane. Its function is as follows. Involved in protein precursor import into chloroplasts. May be part of an intermediate translocation complex acting as a protein-conducting channel at the inner envelope. This chain is Protein TIC 214, found in Lotus japonicus (Lotus corniculatus var. japonicus).